The sequence spans 231 residues: Endonuclease NucS (231 aa).

It belongs to the NucS endonuclease family.

Its subcellular location is the cytoplasm. In terms of biological role, cleaves both 3' and 5' ssDNA extremities of branched DNA structures. In Arthrobacter sp. (strain FB24), this protein is Endonuclease NucS.